The sequence spans 95 residues: Large ribosomal subunit protein eL37z (95 aa).

4 residues coordinate Zn(2+): cysteine 19, cysteine 22, cysteine 34, and cysteine 37. A C4-type zinc finger spans residues 19-37 (CVRCGRRSFHIQKSRCSAC).

The protein belongs to the eukaryotic ribosomal protein eL37 family. Zn(2+) serves as cofactor.

Functionally, binds to the 23S rRNA. The protein is Large ribosomal subunit protein eL37z (RPL37A) of Arabidopsis thaliana (Mouse-ear cress).